Reading from the N-terminus, the 300-residue chain is MKKSALEKLLSLIENLTNQEFKQATNSLISFIYKLNRNEVIELVRSIGILPEAIKPSSTQEKLFSKAGDIVLAKAFQLLNLNSKPLEQRGNAGDVIALSKEFNYGLVADAKSFRLSRTAKNQKDFKVKALSEWREDKDYAVLTAPFFQYPTTKSQIFKQSLDENVLLFSWEHLAILLQLDLEETNIFSFEQLWNFPKKQSKKTSVSDAENNFMRDFNKYFMDLFKIDKDTLNQLLQKEINFIEERSLIEKEYWKKQINIIKNFTREEAIEALLKDINMSSKIETIDSFIKGIKSNDRLYL.

The enzyme catalyses Endonucleolytic cleavage of DNA to give specific double-stranded fragments with terminal 5'-phosphates.. A P subtype restriction enzyme that recognizes the double-stranded sequence 5'-AAGCTT-3' and cleaves after A-1. This is Type II restriction enzyme HindIII from Haemophilus influenzae (strain ATCC 51907 / DSM 11121 / KW20 / Rd).